We begin with the raw amino-acid sequence, 425 residues long: Dihydroorotase (425 aa).

The Zn(2+) site is built by H56 and H58. Substrate is bound by residues 58 to 60 (HYR) and N90. Zn(2+) contacts are provided by D148, H175, and H228. Residue N274 participates in substrate binding. D301 contacts Zn(2+). Residue D301 is part of the active site. Substrate-binding positions include H305 and 319–320 (FG).

It belongs to the metallo-dependent hydrolases superfamily. DHOase family. Class I DHOase subfamily. Zn(2+) is required as a cofactor.

It catalyses the reaction (S)-dihydroorotate + H2O = N-carbamoyl-L-aspartate + H(+). It functions in the pathway pyrimidine metabolism; UMP biosynthesis via de novo pathway; (S)-dihydroorotate from bicarbonate: step 3/3. Its function is as follows. Catalyzes the reversible cyclization of carbamoyl aspartate to dihydroorotate. The chain is Dihydroorotase from Lactobacillus delbrueckii subsp. bulgaricus (strain ATCC 11842 / DSM 20081 / BCRC 10696 / JCM 1002 / NBRC 13953 / NCIMB 11778 / NCTC 12712 / WDCM 00102 / Lb 14).